The sequence spans 940 residues: BTB/POZ domain-containing protein FBL11 (940 aa).

In terms of domain architecture, BTB spans 41–109 (WDMSEILSYG…LYGYDIEITS (69 aa)). One can recognise a BACK domain in the interval 155 to 258 (IQIWSFGLEH…FSLLPLWFIA (104 aa)).

Its pathway is protein modification; protein ubiquitination. In terms of biological role, may act as a substrate-specific adapter of an E3 ubiquitin-protein ligase complex (CUL3-RBX1-BTB) which mediates the ubiquitination and subsequent proteasomal degradation of target proteins. The protein is BTB/POZ domain-containing protein FBL11 (FBL11) of Arabidopsis thaliana (Mouse-ear cress).